The following is a 123-amino-acid chain: Small ribosomal subunit protein uS12 (123 aa).

D89 carries the post-translational modification 3-methylthioaspartic acid.

The protein belongs to the universal ribosomal protein uS12 family. As to quaternary structure, part of the 30S ribosomal subunit. Contacts proteins S8 and S17. May interact with IF1 in the 30S initiation complex.

Its function is as follows. With S4 and S5 plays an important role in translational accuracy. In terms of biological role, interacts with and stabilizes bases of the 16S rRNA that are involved in tRNA selection in the A site and with the mRNA backbone. Located at the interface of the 30S and 50S subunits, it traverses the body of the 30S subunit contacting proteins on the other side and probably holding the rRNA structure together. The combined cluster of proteins S8, S12 and S17 appears to hold together the shoulder and platform of the 30S subunit. This chain is Small ribosomal subunit protein uS12, found in Gluconobacter oxydans (strain 621H) (Gluconobacter suboxydans).